Consider the following 2525-residue polypeptide: Highly reducing polyketide synthase cm3B (2525 aa).

Residues 1–10 (MQSDTNNSPL) are compositionally biased toward polar residues. The disordered stretch occupies residues 1–29 (MQSDTNNSPLSWEELRSGAASSDANSSPP). Positions 29–450 (PEPIAIIGMS…GTNAHVVVDA (422 aa)) constitute a Ketosynthase family 3 (KS3) domain. Residues C202, H336, and H376 each act as for beta-ketoacyl synthase activity in the active site. The malonyl-CoA:ACP transacylase (MAT) domain stretch occupies residues 560–895 (VFSGQGSQYA…FLECLGALHV (336 aa)). The segment at 949 to 1087 (HELLGTFAHD…GLVHAETQAA (139 aa)) is N-terminal hotdog fold. The dehydratase (DH) domain stretch occupies residues 949-1252 (HELLGTFAHD…AKGVHTTTLP (304 aa)). Residues 949 to 1257 (HELLGTFAHD…TTTLPGDTGL (309 aa)) enclose the PKS/mFAS DH domain. The active-site Proton acceptor; for dehydratase activity is the H981. Residues 1107–1257 (VHEVTPQKLY…TTTLPGDTGL (151 aa)) are C-terminal hotdog fold. The Proton donor; for dehydratase activity role is filled by D1169. Residues 1399 to 1504 (LEVGAGTASA…KKLLKPGGKF (106 aa)) form a methyltransferase (CMet) domain region. Residues 1799-2111 (GLLESIRWKD…AGKHTGKIVL (313 aa)) form an enoyl reductase (ER) domain region. A Carrier domain is found at 2411–2489 (AQLLENISQL…ELAKIIAKES (79 aa)). Positions 2411 to 2489 (AQLLENISQL…ELAKIIAKES (79 aa)) are ketoreductase (KR) domain. The residue at position 2449 (S2449) is an O-(pantetheine 4'-phosphoryl)serine.

It participates in secondary metabolite biosynthesis. In terms of biological role, highly reducing polyketide synthase; part of the gene cluster that mediates the biosynthesis of beauveriolides I and III, cyclodepsipeptides acting as inhibitors of the acyl-CoA:cholesterol acyltransferase. The HR-PKS cm3B initiates the biosynthesis of beauveriolides by iteratively catalyzing the formation of the linear polyketide chain. The ATP-dependent acetyl-CoA ligase cm3D converts the polyketide carboxylic acid to a CoA thioester which id shuttled to the first T domain in the NRPS cm3A by the acetyltransferase cm3C. Cm3A contains 13 domains and assembles the polyketide chain, L-phenylalanine, L-alanine, and D-leucine (or D-allo-isoleucine) to form beauveriolide I (or beauveriolide III). The production of both beauveriolides I and III suggests the substrate adaptability of cm3B, using different amino acids as substrates. This is Highly reducing polyketide synthase cm3B from Cordyceps militaris (strain CM01) (Caterpillar fungus).